The following is a 363-amino-acid chain: Protein-glutamate methylesterase/protein-glutamine glutaminase 2 (363 aa).

The 118-residue stretch at 6-123 (RVLIVDDSAS…AQFLLESKIH (118 aa)) folds into the Response regulatory domain. Asp57 carries the post-translational modification 4-aspartylphosphate. In terms of domain architecture, CheB-type methylesterase spans 172-363 (ARTTESVICI…AMEILRAGNR (192 aa)). Catalysis depends on residues Ser184, His210, and Asp306.

It belongs to the CheB family. Post-translationally, phosphorylated by CheA. Phosphorylation of the N-terminal regulatory domain activates the methylesterase activity.

The protein localises to the cytoplasm. The enzyme catalyses [protein]-L-glutamate 5-O-methyl ester + H2O = L-glutamyl-[protein] + methanol + H(+). The catalysed reaction is L-glutaminyl-[protein] + H2O = L-glutamyl-[protein] + NH4(+). Functionally, involved in chemotaxis. Part of a chemotaxis signal transduction system that modulates chemotaxis in response to various stimuli. Catalyzes the demethylation of specific methylglutamate residues introduced into the chemoreceptors (methyl-accepting chemotaxis proteins or MCP) by CheR. Also mediates the irreversible deamidation of specific glutamine residues to glutamic acid. The sequence is that of Protein-glutamate methylesterase/protein-glutamine glutaminase 2 from Rhodospirillum rubrum (strain ATCC 11170 / ATH 1.1.1 / DSM 467 / LMG 4362 / NCIMB 8255 / S1).